Here is a 507-residue protein sequence, read N- to C-terminus: Histidine ammonia-lyase (507 aa).

The segment at residues 140–142 (ASG) is a cross-link (5-imidazolinone (Ala-Gly)). The residue at position 141 (Ser-141) is a 2,3-didehydroalanine (Ser).

It belongs to the PAL/histidase family. Contains an active site 4-methylidene-imidazol-5-one (MIO), which is formed autocatalytically by cyclization and dehydration of residues Ala-Ser-Gly.

The protein localises to the cytoplasm. The catalysed reaction is L-histidine = trans-urocanate + NH4(+). The protein operates within amino-acid degradation; L-histidine degradation into L-glutamate; N-formimidoyl-L-glutamate from L-histidine: step 1/3. The polypeptide is Histidine ammonia-lyase (Yersinia enterocolitica serotype O:8 / biotype 1B (strain NCTC 13174 / 8081)).